Reading from the N-terminus, the 341-residue chain is Heme A synthase (341 aa).

Transmembrane regions (helical) follow at residues 8-28 (VIIW…VGGI), 92-112 (FHRF…VYFL), 126-146 (IVLL…VRSG), 160-180 (LHLT…LDLI), 201-221 (AALL…AGLI), 256-276 (VQFV…FLFF), 294-314 (LVVF…YSVP), and 315-335 (LALG…MTYT). Histidine 260 is a heme binding site. Histidine 321 contributes to the heme binding site.

It belongs to the COX15/CtaA family. Type 2 subfamily. As to quaternary structure, interacts with CtaB. Requires heme b as cofactor.

The protein resides in the cell membrane. It catalyses the reaction Fe(II)-heme o + 2 A + H2O = Fe(II)-heme a + 2 AH2. It participates in porphyrin-containing compound metabolism; heme A biosynthesis; heme A from heme O: step 1/1. Catalyzes the conversion of heme O to heme A by two successive hydroxylations of the methyl group at C8. The first hydroxylation forms heme I, the second hydroxylation results in an unstable dihydroxymethyl group, which spontaneously dehydrates, resulting in the formyl group of heme A. This Flavobacterium johnsoniae (strain ATCC 17061 / DSM 2064 / JCM 8514 / BCRC 14874 / CCUG 350202 / NBRC 14942 / NCIMB 11054 / UW101) (Cytophaga johnsonae) protein is Heme A synthase.